The following is a 20-amino-acid chain: Poneritoxin (20 aa).

M18 carries the post-translational modification Methionine sulfoxide; in form U1-PONTX-Dq3c. At K19 the chain carries Lysine amide; in form U1-PONTX-Dq3a and U1-PONTX-Dq3c.

Post-translationally, the peptide spanning residues 2 to 19 occurs in 3 forms and has been given 3 different names. U1-PONTX-Dq3a has an amidated Lys-19, U1-PONTX-Dq3c has an amidated Lys-19 and an oxidized Met-18, and U1-PONTX-Dq3b has no modifications at either Met-18 or Lys-19. As to expression, expressed by the venom gland.

The protein localises to the secreted. Functionally, may have antimicrobial properties, like most ant linear peptides. The sequence is that of Poneritoxin from Dinoponera quadriceps (South American ant).